The following is a 286-amino-acid chain: Tyrosine recombinase Tlet_1492 (286 aa).

The Core-binding (CB) domain maps to 1–86; that stretch reads MERILQNFSD…SLRSFFNYLQ (86 aa). One can recognise a Tyr recombinase domain in the interval 107–280; that stretch reads RIPDFLLPSE…VDQEKFDAIN (174 aa). Residues arginine 143, lysine 168, histidine 232, arginine 235, and histidine 258 contribute to the active site. The O-(3'-phospho-DNA)-tyrosine intermediate role is filled by tyrosine 267.

This sequence belongs to the 'phage' integrase family.

It is found in the cytoplasm. Site-specific tyrosine recombinase, which acts by catalyzing the cutting and rejoining of the recombining DNA molecules. The polypeptide is Tyrosine recombinase Tlet_1492 (Pseudothermotoga lettingae (strain ATCC BAA-301 / DSM 14385 / NBRC 107922 / TMO) (Thermotoga lettingae)).